A 453-amino-acid chain; its full sequence is Endoglucanase A (453 aa).

A signal peptide spans 1–26; it reads MNCRKYLLSGLAVFGLAATSAVAALS. D82 serves as the catalytic Nucleophile. Residues 115 to 126 form a linker ('hinge') (Pro-Thr box) region; sequence TTPTTRKPTTTP. H417 is a catalytic residue.

It belongs to the glycosyl hydrolase 9 (cellulase E) family. As to quaternary structure, monomer.

The protein localises to the periplasm. It catalyses the reaction Endohydrolysis of (1-&gt;4)-beta-D-glucosidic linkages in cellulose, lichenin and cereal beta-D-glucans.. Its function is as follows. High levels of endoglucanase activity detected on acid-swollen cellulose, ball-milled cellulose, and carboxymethyl cellulose; moderate levels detected on filter paper, phosphoric acid-swollen cellulose, lichenan, and xylan. This Fibrobacter succinogenes (Bacteroides succinogenes) protein is Endoglucanase A (endA).